A 681-amino-acid chain; its full sequence is Transferrin (681 aa).

The first 18 residues, 1-18 (MALKLLTLIALTCAAANA), serve as a signal peptide directing secretion. Transferrin-like domains lie at 23–364 (YKLC…ERGH) and 371–676 (VRLC…DVIS). 2 cysteine pairs are disulfide-bonded: Cys26-Cys60 and Cys35-Cys51. The Fe(3+) site is built by Asp75 and Tyr108. Intrachain disulfides connect Cys132/Cys228, Cys181/Cys207, Cys204/Cys213, and Cys271/Cys284. Residues Thr134, Arg138, Val140, and Gly141 each coordinate hydrogencarbonate. A glycan (N-linked (GlcNAc...) asparagine) is linked at Asn218. A Fe(3+)-binding site is contributed by Tyr222. Asn355 carries N-linked (GlcNAc...) asparagine glycosylation. Intrachain disulfides connect Cys374/Cys411 and Cys384/Cys402. Asn418 is a glycosylation site (N-linked (GlcNAc...) asparagine). Intrachain disulfides connect Cys478–Cys551, Cys506–Cys678, and Cys579–Cys596.

This sequence belongs to the transferrin family.

It localises to the secreted. Functionally, transferrins are iron binding transport proteins which bind Fe(3+) ion in association with the binding of an anion, usually bicarbonate. This transferrin binds only one Fe(3+) ion per protein molecule. The chain is Transferrin from Manduca sexta (Tobacco hawkmoth).